The sequence spans 80 residues: MPVSVGSYGQQAQPSCFDRVKMGFMMGFAVGMAAGAMFGTFSCLRIGMRGRELMGGVGKTMMQSGGTFGTFMAIGMGIRC.

Residues 22–44 form a helical membrane-spanning segment; that stretch reads MGFMMGFAVGMAAGAMFGTFSCL. The tract at residues 42–60 is sufficient for antibacterial activity; that stretch reads SCLRIGMRGRELMGGVGKT.

Belongs to the MGR2 family.

The protein localises to the mitochondrion inner membrane. Functionally, has antibacterial activity against a variety of bacteria including S.aureus, P.aeruginosa and M.tuberculosis. Acts by inducing bacterial membrane breakage. Its function is as follows. Induces production of reactive oxygen species (ROS) which are necessary for cell proliferation. May play a role in inducing oxidative DNA damage and replicative senescence. May play a role in the coordination of mitochondrial morphology and cell proliferation. This chain is Reactive oxygen species modulator 1 (romo1), found in Danio rerio (Zebrafish).